The chain runs to 294 residues: 4-hydroxy-tetrahydrodipicolinate synthase (294 aa).

T45 provides a ligand contact to pyruvate. The active-site Proton donor/acceptor is Y133. K161 (schiff-base intermediate with substrate) is an active-site residue. Residue I203 participates in pyruvate binding.

The protein belongs to the DapA family. As to quaternary structure, homotetramer; dimer of dimers.

It is found in the cytoplasm. The enzyme catalyses L-aspartate 4-semialdehyde + pyruvate = (2S,4S)-4-hydroxy-2,3,4,5-tetrahydrodipicolinate + H2O + H(+). It participates in amino-acid biosynthesis; L-lysine biosynthesis via DAP pathway; (S)-tetrahydrodipicolinate from L-aspartate: step 3/4. Functionally, catalyzes the condensation of (S)-aspartate-beta-semialdehyde [(S)-ASA] and pyruvate to 4-hydroxy-tetrahydrodipicolinate (HTPA). The chain is 4-hydroxy-tetrahydrodipicolinate synthase from Alcanivorax borkumensis (strain ATCC 700651 / DSM 11573 / NCIMB 13689 / SK2).